The primary structure comprises 138 residues: ATP synthase epsilon chain (138 aa).

It belongs to the ATPase epsilon chain family. In terms of assembly, F-type ATPases have 2 components, CF(1) - the catalytic core - and CF(0) - the membrane proton channel. CF(1) has five subunits: alpha(3), beta(3), gamma(1), delta(1), epsilon(1). CF(0) has three main subunits: a, b and c.

The protein localises to the cell inner membrane. In terms of biological role, produces ATP from ADP in the presence of a proton gradient across the membrane. The sequence is that of ATP synthase epsilon chain from Polynucleobacter necessarius subsp. necessarius (strain STIR1).